The following is a 285-amino-acid chain: HTH-type transcriptional regulator MurR (285 aa).

Residues 1 to 77 (MLYLTKIRNA…MALIGEYSAS (77 aa)) enclose the HTH rpiR-type domain. The H-T-H motif DNA-binding region spans 37-56 (SRKMAKQLGISQSSIVKFAQ). Positions 128 to 268 (IIEVISKAPF…FVGLVQLNDV (141 aa)) constitute an SIS domain.

In terms of assembly, homotetramer.

The protein operates within amino-sugar metabolism; N-acetylmuramate degradation [regulation]. In terms of biological role, represses the expression of the murPQ operon involved in the uptake and degradation of N-acetylmuramic acid (MurNAc). Binds to two adjacent inverted repeats within the operator region. MurNAc 6-phosphate, the substrate of MurQ, is the specific inducer that weakens binding of MurR to the operator. This is HTH-type transcriptional regulator MurR from Escherichia coli O7:K1 (strain IAI39 / ExPEC).